The primary structure comprises 118 residues: Ribonuclease P protein component (118 aa).

Belongs to the RnpA family. As to quaternary structure, consists of a catalytic RNA component (M1 or rnpB) and a protein subunit.

The enzyme catalyses Endonucleolytic cleavage of RNA, removing 5'-extranucleotides from tRNA precursor.. RNaseP catalyzes the removal of the 5'-leader sequence from pre-tRNA to produce the mature 5'-terminus. It can also cleave other RNA substrates such as 4.5S RNA. The protein component plays an auxiliary but essential role in vivo by binding to the 5'-leader sequence and broadening the substrate specificity of the ribozyme. This is Ribonuclease P protein component from Mycobacterium sp. (strain KMS).